Here is a 206-residue protein sequence, read N- to C-terminus: Transmembrane emp24 domain-containing protein bai (206 aa).

The N-terminal stretch at 1 to 17 (MAKATFFYFLFIGYVWP) is a signal peptide. At 18–172 (IDSVMFNLAP…RDTNEKTNSR (155 aa)) the chain is on the lumenal side. Residues 30–140 (QKCLKEDIQA…LKPLEVDLKR (111 aa)) enclose the GOLD domain. A helical transmembrane segment spans residues 173–193 (VLFFSIFSMCCLLGLATWQVL). The Cytoplasmic portion of the chain corresponds to 194-206 (YLRRYFKAKKLIE).

It belongs to the EMP24/GP25L family.

The protein localises to the membrane. Its function is as follows. Eca and bai are essential, though not redundant, for dorsoventral patterning of the embryo. Specifically required during early embryogenesis for the activity of maternal tkv, while the zygotic tkv is not affected. The polypeptide is Transmembrane emp24 domain-containing protein bai (Drosophila persimilis (Fruit fly)).